A 1523-amino-acid polypeptide reads, in one-letter code: Dicer-like protein 1 (1523 aa).

Over residues leucine 24–threonine 38 the composition is skewed to polar residues. Residues leucine 24–arginine 58 form a disordered region. Residues leucine 123–leucine 304 form the Helicase ATP-binding domain. Leucine 136 to threonine 143 is an ATP binding site. The DEAH box motif lies at aspartate 249 to histidine 252. The Helicase C-terminal domain maps to leucine 444 to leucine 617. Residues alanine 640 to alanine 730 enclose the Dicer dsRNA-binding fold domain. The region spanning glutamate 879 to alanine 1007 is the PAZ domain. RNase III domains follow at residues isoleucine 1031–glycine 1190 and glycine 1241–aspartate 1392. Mg(2+)-binding residues include glutamate 1281, aspartate 1378, and glutamate 1381. The region spanning threonine 1426–asparagine 1494 is the DRBM domain. 4 residues coordinate Zn(2+): cysteine 1438, histidine 1465, cysteine 1506, and cysteine 1508.

Belongs to the helicase family. Dicer subfamily. The cofactor is Mg(2+). Requires Mn(2+) as cofactor.

Functionally, dicer-like endonuclease involved in cleaving double-stranded RNA in the RNA interference (RNAi) pathway. Produces 21 to 25 bp dsRNAs (siRNAs) which target the selective destruction of homologous RNAs leading to sequence-specific suppression of gene expression, called post-transcriptional gene silencing (PTGS). Part of a broad host defense response against viral infection and transposons. This Aspergillus oryzae (strain ATCC 42149 / RIB 40) (Yellow koji mold) protein is Dicer-like protein 1 (dcl1).